The following is a 219-amino-acid chain: Putative zinc metalloprotease YwhC (219 aa).

The chain crosses the membrane as a helical span at residues 4-24 (FLYYPLSLMPYLVITLIVSFT). Zn(2+) is bound at residue His-26. Glu-27 is a catalytic residue. Position 30 (His-30) interacts with Zn(2+). A run of 4 helical transmembrane segments spans residues 52 to 72 (PIKHLDPFGTILILVAGFGWA), 94 to 114 (IAGPVSNLILAFIGFFLLVLM), 132 to 152 (FFSIWIQLNLVLFLFNLLPLP), and 180 to 200 (FIVFLVLFVTPLGSYVLWPML).

Belongs to the peptidase M50B family. The cofactor is Zn(2+).

The protein resides in the cell membrane. The protein is Putative zinc metalloprotease YwhC (ywhC) of Bacillus subtilis (strain 168).